A 338-amino-acid chain; its full sequence is Ketol-acid reductoisomerase (NADP(+)) (338 aa).

The KARI N-terminal Rossmann domain occupies 1–181 (MRVYYDKDCD…GGGRSGIIET (181 aa)). NADP(+) is bound by residues 24–27 (YGSQ), Arg47, Ser50, Ser52, and 82–85 (DENQ). His107 is a catalytic residue. Gly133 is a binding site for NADP(+). The region spanning 182-327 (TFKDETETDL…EKLRGMMPWI (146 aa)) is the KARI C-terminal knotted domain. Mg(2+) contacts are provided by Asp190, Glu194, Glu226, and Glu230. Residue Ser251 participates in substrate binding.

The protein belongs to the ketol-acid reductoisomerase family. Mg(2+) is required as a cofactor.

It catalyses the reaction (2R)-2,3-dihydroxy-3-methylbutanoate + NADP(+) = (2S)-2-acetolactate + NADPH + H(+). The catalysed reaction is (2R,3R)-2,3-dihydroxy-3-methylpentanoate + NADP(+) = (S)-2-ethyl-2-hydroxy-3-oxobutanoate + NADPH + H(+). It functions in the pathway amino-acid biosynthesis; L-isoleucine biosynthesis; L-isoleucine from 2-oxobutanoate: step 2/4. The protein operates within amino-acid biosynthesis; L-valine biosynthesis; L-valine from pyruvate: step 2/4. Functionally, involved in the biosynthesis of branched-chain amino acids (BCAA). Catalyzes an alkyl-migration followed by a ketol-acid reduction of (S)-2-acetolactate (S2AL) to yield (R)-2,3-dihydroxy-isovalerate. In the isomerase reaction, S2AL is rearranged via a Mg-dependent methyl migration to produce 3-hydroxy-3-methyl-2-ketobutyrate (HMKB). In the reductase reaction, this 2-ketoacid undergoes a metal-dependent reduction by NADPH to yield (R)-2,3-dihydroxy-isovalerate. In Chromohalobacter salexigens (strain ATCC BAA-138 / DSM 3043 / CIP 106854 / NCIMB 13768 / 1H11), this protein is Ketol-acid reductoisomerase (NADP(+)).